A 75-amino-acid chain; its full sequence is Small ribosomal subunit protein bS16 (75 aa).

The protein belongs to the bacterial ribosomal protein bS16 family.

The protein is Small ribosomal subunit protein bS16 of Helicobacter pylori (strain G27).